We begin with the raw amino-acid sequence, 351 residues long: Peptide chain release factor 1 (351 aa).

At glutamine 233 the chain carries N5-methylglutamine.

It belongs to the prokaryotic/mitochondrial release factor family. Methylated by PrmC. Methylation increases the termination efficiency of RF1.

The protein resides in the cytoplasm. In terms of biological role, peptide chain release factor 1 directs the termination of translation in response to the peptide chain termination codons UAG and UAA. This chain is Peptide chain release factor 1 (prfA), found in Treponema pallidum (strain Nichols).